The sequence spans 79 residues: uncharacterized protein (79 aa).

This is an uncharacterized protein from Rhizobium leguminosarum.